Consider the following 150-residue polypeptide: Histone H2B.2 (150 aa).

Basic and acidic residues-rich tracts occupy residues 1–21 and 33–49; these read MAPKAEKKPAEKKPAEEKAGE and EKRLPASKGEKGGEGKK. Residues 1–58 are disordered; it reads MAPKAEKKPAEKKPAEEKAGEKAPAAGKKPKAEKRLPASKGEKGGEGKKERGRKKAKK. Residues Lys-7 and Lys-34 each carry the N6-acetyllysine modification. Residue Lys-146 forms a Glycyl lysine isopeptide (Lys-Gly) (interchain with G-Cter in ubiquitin) linkage.

Belongs to the histone H2B family. As to quaternary structure, the nucleosome is a histone octamer containing two molecules each of H2A, H2B, H3 and H4 assembled in one H3-H4 heterotetramer and two H2A-H2B heterodimers. The octamer wraps approximately 147 bp of DNA. Post-translationally, can be acetylated to form H2BK6ac and H2BK33ac. Monoubiquitinated by BRE1 to form H2BK143ub1 and deubiquitinated by UBP26. Required for heterochromatic histone H3 di- and trimethylation at H3K4me. May give a specific tag for epigenetic transcriptional activation.

The protein localises to the nucleus. Its subcellular location is the chromosome. In terms of biological role, core component of nucleosome. Nucleosomes wrap and compact DNA into chromatin, limiting DNA accessibility to the cellular machineries which require DNA as a template. Histones thereby play a central role in transcription regulation, DNA repair, DNA replication and chromosomal stability. DNA accessibility is regulated via a complex set of post-translational modifications of histones, also called histone code, and nucleosome remodeling. The protein is Histone H2B.2 (H2B.2) of Oryza sativa subsp. indica (Rice).